A 323-amino-acid chain; its full sequence is HTH-type transcriptional activator CmpR (323 aa).

In terms of domain architecture, HTH lysR-type spans 4–61; sequence LTLHQLKVFEAAARHSSFTRAAEELYLTQPTVSIQVKQLTKAVGLPLFEQIGKRLYLT. Residues 21 to 40 constitute a DNA-binding region (H-T-H motif); sequence FTRAAEELYLTQPTVSIQVK. Residues 304-323 are disordered; that stretch reads IPESTTTDPELDAPQPVVGV.

The protein belongs to the LysR transcriptional regulatory family.

Its subcellular location is the cytoplasm. Functionally, activates transcription of the cmpABCD operon under carbon dioxide-limited conditions. In Synechococcus elongatus (strain ATCC 33912 / PCC 7942 / FACHB-805) (Anacystis nidulans R2), this protein is HTH-type transcriptional activator CmpR (cmpR).